The following is a 526-amino-acid chain: tRNA (guanine(26)-N(2))-dimethyltransferase (526 aa).

A compositionally biased stretch (polar residues) spans 1–10 (MTENVNSSGD). Positions 1-20 (MTENVNSSGDSAIKSEDKEE) are disordered. Positions 22 to 441 (TVIQEGQAKV…APMHLLWDIY (420 aa)) constitute a Trm1 methyltransferase domain. S-adenosyl-L-methionine is bound by residues Arg47, Arg104, and Asp122. Residues Cys286, Cys289, Cys325, and Cys328 each contribute to the Zn(2+) site. The tract at residues 498–526 (KGKNWGPRQKAKGSVNSTKAGFQLTEHKE) is disordered.

This sequence belongs to the class I-like SAM-binding methyltransferase superfamily. Trm1 family.

The enzyme catalyses guanosine(26) in tRNA + 2 S-adenosyl-L-methionine = N(2)-dimethylguanosine(26) in tRNA + 2 S-adenosyl-L-homocysteine + 2 H(+). Functionally, dimethylates a single guanine residue at position 26 of most tRNAs using S-adenosyl-L-methionine as donor of the methyl groups. This is tRNA (guanine(26)-N(2))-dimethyltransferase (trm-1) from Caenorhabditis elegans.